The following is a 72-amino-acid chain: GDDVKSACCDTCLCTKSNPPTCRCVDVGETCHSACLSCICAYSYPPKCQCFDTQKFCYRACHNSEKEEVIKG.

Intrachain disulfides connect C8–C61, C9–C24, C12–C57, C14–C22, C31–C38, C35–C50, and C40–C48.

As to quaternary structure, dimer.

Its function is as follows. Inhibits trypsin (IC(50)=0.9 nM) and alpha-chymotrypsin (IC(50)=1.1 nM). This Lathyrus sativus (White vetchling) protein is Bowman-Birk type proteinase inhibitor 2a.